Consider the following 674-residue polypeptide: Acetyl-coenzyme A synthetase (674 aa).

CoA-binding positions include 201 to 204 and T320; that span reads RGGR. ATP contacts are provided by residues 396-398, 420-425, D518, and R533; these read GEP and DTYWQT. A CoA-binding site is contributed by S541. R544 is an ATP binding site. CoA is bound at residue R603.

Belongs to the ATP-dependent AMP-binding enzyme family.

The enzyme catalyses acetate + ATP + CoA = acetyl-CoA + AMP + diphosphate. In Dictyostelium discoideum (Social amoeba), this protein is Acetyl-coenzyme A synthetase (acsA).